A 797-amino-acid chain; its full sequence is MAALAYNLGKREINHYFSVRSAKVLALVAVLLLAACHLASRRYRGNDSCEYLLSSGRFLGEKVWQPHSCMMHKYKISEAKTCLVDKHIAFIGDSRIRQLFYSFVKIINPQFKEEGNKHENIPFEDKAASVKVDFLWHPEVNGSMKQCIKVWTEDSVLKPHVIVAGAATWSIKIHNGSEEALAQYKMNITSIAPLLEKLAKTSDVYWVLQDPVYEDLLSENRKMITNEKIDAYNEAAVSILNSSTRTSKSNVKMFSVSKLIAQETIMESLDGLHLPESSRETSAMILMNVYCNKVVKPVDGSCCQPRPPLTLIQKLAACFFTLSIIGYFIFYVIHRNAHRKNKPCTDLESGEEKKNIINTPVSSLEILLQSFCKLGLIMAYFYMCDRANLFMKENKFYTHSSFFIPIIYILVLGVFYNENTKETKVLNREQTDEWKGWMQLVILIYHISGASTFLPVYMHIRVLVAAYLFQTGYGHFSYFWIKGDFGIHRVCQVLFRLNFLVVVLCIVMDRPYQFYYFVPLVTVWFMVIYVTLALWPQITQKKANGNFFWYLGLLLKLGLLLLCIWFLAYSQGAFEKIFSLWPLSKCFELEGSVYEWWFRWRLDRYVVFHGVLFAFIYLALQRRQILSEGKGEPLFSNKISNFLLFVSVVSFLTYSIWASSCKNKAECNELHPSVSVVQIVAFILIRNIPGYARSIYSSFFAWFGKISLELFICQYHIWLAADTRGILVLIPGNPTLNIIVSTFIFVCVAHEISQITTDLAQVVIPKDNPSLFRRLACTIAFFGGVLILSSIQDKSRL.

Over 1–18 the chain is Cytoplasmic; that stretch reads MAALAYNLGKREINHYFS. Residues 19–39 traverse the membrane as a helical segment; that stretch reads VRSAKVLALVAVLLLAACHLA. The Lumenal portion of the chain corresponds to 40–313; sequence SRRYRGNDSC…QPRPPLTLIQ (274 aa). N46 is a glycosylation site (N-linked (GlcNAc...) asparagine). The active-site Acyl-ester intermediate is S94. N-linked (GlcNAc...) asparagine glycosylation is found at N175 and N187. Catalysis depends on residues D270 and H273. The chain crosses the membrane as a helical span at residues 314 to 334; sequence KLAACFFTLSIIGYFIFYVIH. Topologically, residues 335–363 are cytoplasmic; sequence RNAHRKNKPCTDLESGEEKKNIINTPVSS. Residues 364–384 traverse the membrane as a helical segment; the sequence is LEILLQSFCKLGLIMAYFYMC. Residues 385–395 lie on the Lumenal side of the membrane; sequence DRANLFMKENK. Residues 396–416 traverse the membrane as a helical segment; that stretch reads FYTHSSFFIPIIYILVLGVFY. Residues 417 to 439 are Cytoplasmic-facing; sequence NENTKETKVLNREQTDEWKGWMQ. The chain crosses the membrane as a helical span at residues 440-460; the sequence is LVILIYHISGASTFLPVYMHI. R461 is a topological domain (lumenal). A helical membrane pass occupies residues 462 to 482; that stretch reads VLVAAYLFQTGYGHFSYFWIK. Residues 483–486 lie on the Cytoplasmic side of the membrane; that stretch reads GDFG. A helical transmembrane segment spans residues 487-507; that stretch reads IHRVCQVLFRLNFLVVVLCIV. At 508–513 the chain is on the lumenal side; it reads MDRPYQ. A helical transmembrane segment spans residues 514-534; the sequence is FYYFVPLVTVWFMVIYVTLAL. The Cytoplasmic portion of the chain corresponds to 535–546; the sequence is WPQITQKKANGN. Residues 547-567 form a helical membrane-spanning segment; sequence FFWYLGLLLKLGLLLLCIWFL. Residues 568–599 lie on the Lumenal side of the membrane; the sequence is AYSQGAFEKIFSLWPLSKCFELEGSVYEWWFR. The chain crosses the membrane as a helical span at residues 600 to 620; the sequence is WRLDRYVVFHGVLFAFIYLAL. Residues 621 to 638 are Cytoplasmic-facing; sequence QRRQILSEGKGEPLFSNK. The helical transmembrane segment at 639–659 threads the bilayer; sequence ISNFLLFVSVVSFLTYSIWAS. Residues 660–671 are Lumenal-facing; sequence SCKNKAECNELH. A helical membrane pass occupies residues 672-692; the sequence is PSVSVVQIVAFILIRNIPGYA. Residues 693 to 698 lie on the Cytoplasmic side of the membrane; that stretch reads RSIYSS. Residues 699–719 form a helical membrane-spanning segment; that stretch reads FFAWFGKISLELFICQYHIWL. Over 720 to 725 the chain is Lumenal; it reads AADTRG. Residues 726–746 form a helical membrane-spanning segment; the sequence is ILVLIPGNPTLNIIVSTFIFV. Residues 747–770 are Cytoplasmic-facing; it reads CVAHEISQITTDLAQVVIPKDNPS. Residues 771–791 traverse the membrane as a helical segment; it reads LFRRLACTIAFFGGVLILSSI. The Lumenal segment spans residues 792–797; it reads QDKSRL.

The protein belongs to the PC-esterase family. CASD1 subfamily. In terms of processing, N-glycosylated. In terms of tissue distribution, ubiquitously expressed.

Its subcellular location is the golgi apparatus membrane. It carries out the reaction CMP-N-acetyl-beta-neuraminate + acetyl-CoA = CMP-N-acetyl-9-O-acetyl-beta-neuraminate + CoA. The catalysed reaction is a ganglioside GD3 (d18:1(4E)) + acetyl-CoA = a ganglioside Ac-O-7-GD3(d18:1(4E)) + CoA. It catalyses the reaction CMP-N-acetyl-beta-neuraminate + acetyl-CoA = CMP-N-acetyl-7-O-acetyl-beta-neuraminate + CoA. Functionally, key enzyme in the biosynthesis of O-acetylated (O-Ac) sialoglycans such as gangliosides O-AcGD3 and O-AcGD2, which affect various processes such as cell-cell interactions, host-pathogen recognition. Catalyzes the transfer of an acetyl group from a donor, the acetyl-coenzyme-A molecule (acetyl-CoA), to the C7/8/9 OH-position of a sialic acid residue. The primary site of O-acetyl group transfer on sialic acid seems to depend on cell type and can be C7, from which the O-acetyl group could subsequently migrate to the C8 and then to the C9 position, or at C9 with possibility of migrating to the C8 and then to the C7 position. Together with ST8SIA1 (GD3 synthase) it increases the levels of ganglioside Ac-O-7-GD3. Can transfer the acetyl group from acetyl-CoA to free sialate (N-acetylneuraminate, Neu5Ac) in vitro, but has preferred substrate specificity for CMP-activated sialate (CMP-Neu5Ac), resulting in the formation of 9-O-acetylated CMP-Neu5Ac (CMP-Neu5,9Ac2). CMP-Neu5,9Ac2 may be used by sialyltransferases as a sialate donor for glycoconjugate acceptors such as ganglioside GD3. O-acetylation at position C9 of ganglioside GD3 can counteract the pro-apoptotic effects of the ganglioside GD3 in tumor cells. In Mus musculus (Mouse), this protein is N-acetylneuraminate (7)9-O-acetyltransferase.